Reading from the N-terminus, the 395-residue chain is MAKEKFNRTKVHMNVGTIGHVDHGKTTLSAAITTYCAKKYGDKLLKYDEIDNAPEEKERGITINTRHLEYQSDKRHYAHIDCPGHADYVKNMITGAAQMDGAILVVSAPDSVMPQTKEHLLLARQVGVPSIIVFLNKVDLVDDPELVELVEEEVRETLTSYGFPEDTPIIKGSAFKALQEGATAEDTACIEELLKTMDEYFKDPVRDSDKPFLLPIEDIFTIQGRGTVVTGRIERGVIKMNEEVEIVGIKPTKKTVVTGIEMFNKLLDEGEAGDNVGLLLRGIEKKEVERGQVLAKPGSIHPHTKFEAQIYVLSKEEGGRHSPFFSGYRPQFYFRTTDITGTVNLPEGTDMVKPGDNTKIIGELIHPIAMDQGLKLAIREGGRTIASGQVTNIIE.

In terms of domain architecture, tr-type G spans 10-205; it reads KVHMNVGTIG…TMDEYFKDPV (196 aa). The tract at residues 19-26 is G1; the sequence is GHVDHGKT. 19–26 provides a ligand contact to GTP; the sequence is GHVDHGKT. T26 contacts Mg(2+). Residues 60–64 form a G2 region; sequence GITIN. The tract at residues 81 to 84 is G3; it reads DCPG. GTP contacts are provided by residues 81–85 and 136–139; these read DCPGH and NKVD. Residues 136-139 form a G4 region; it reads NKVD. Residues 173–175 form a G5 region; sequence SAF.

It belongs to the TRAFAC class translation factor GTPase superfamily. Classic translation factor GTPase family. EF-Tu/EF-1A subfamily. In terms of assembly, monomer.

The protein localises to the cytoplasm. The catalysed reaction is GTP + H2O = GDP + phosphate + H(+). Its function is as follows. GTP hydrolase that promotes the GTP-dependent binding of aminoacyl-tRNA to the A-site of ribosomes during protein biosynthesis. This Treponema denticola (strain ATCC 35405 / DSM 14222 / CIP 103919 / JCM 8153 / KCTC 15104) protein is Elongation factor Tu.